The sequence spans 280 residues: MTDKIIELKNVTFRYDENQEKPTLNNISFHVKHGEWLSIIGHNGSGKSTTVRLIDGLLEAESGQILIEGHKLSEDNVWDIRHKISMVFQNPDNQFVGATVEDDIAFGLENKGIPLKEMRERVVEALNLVDMSDFKTREPARLSGGQKQRVAIAGAVAMRPSIIILDEATSMLDPEGRLELIGTIQKIREQYGMTVISITHDLDEVTLSDRVLVMKNGQIESSSSPRELFSRGDELLDLGLDIPFTSTIIKALRQIGFTFDNRYLLEKELEDKLWALISKK.

Residues 6-241 (IELKNVTFRY…GDELLDLGLD (236 aa)) form the ABC transporter domain. ATP is bound at residue 41–48 (GHNGSGKS).

The protein belongs to the ABC transporter superfamily. Energy-coupling factor EcfA family. As to quaternary structure, forms a stable energy-coupling factor (ECF) transporter complex composed of 2 membrane-embedded substrate-binding proteins (S component), 2 ATP-binding proteins (A component) and 2 transmembrane proteins (T component).

Its subcellular location is the cell membrane. Its function is as follows. ATP-binding (A) component of a common energy-coupling factor (ECF) ABC-transporter complex. Unlike classic ABC transporters this ECF transporter provides the energy necessary to transport a number of different substrates. This is Energy-coupling factor transporter ATP-binding protein EcfA1 from Streptococcus mutans serotype c (strain ATCC 700610 / UA159).